The chain runs to 124 residues: UPF0102 protein Noc_0355 (124 aa).

It belongs to the UPF0102 family.

This chain is UPF0102 protein Noc_0355, found in Nitrosococcus oceani (strain ATCC 19707 / BCRC 17464 / JCM 30415 / NCIMB 11848 / C-107).